A 175-amino-acid chain; its full sequence is MLPAYLPNPFAALFGGGRPIDNGKTMSDGRRILGDGKTYRGFFVGLIFGALAGLMQMQLLEKYPVLFGVELPTFGTGGSNTTILIFALAVGSLFGDMFMSFFKRRMGLKRGAPLPVIDQLDFVLGALIFAYLASPVWFAEQFTFKVIAVILIITPLLHLATNVVGYFIGVKKEPW.

Transmembrane regions (helical) follow at residues 41–61 (GFFVGLIFGALAGLMQMQLLE), 82–102 (TILIFALAVGSLFGDMFMSFF), 122–142 (FVLGALIFAYLASPVWFAEQF), and 147–167 (IAVILIITPLLHLATNVVGYF).

It belongs to the CDP-archaeol synthase family. Mg(2+) is required as a cofactor.

The protein localises to the cell membrane. It catalyses the reaction 2,3-bis-O-(geranylgeranyl)-sn-glycerol 1-phosphate + CTP + H(+) = CDP-2,3-bis-O-(geranylgeranyl)-sn-glycerol + diphosphate. It functions in the pathway membrane lipid metabolism; glycerophospholipid metabolism. Functionally, catalyzes the formation of CDP-2,3-bis-(O-geranylgeranyl)-sn-glycerol (CDP-archaeol) from 2,3-bis-(O-geranylgeranyl)-sn-glycerol 1-phosphate (DGGGP) and CTP. This reaction is the third ether-bond-formation step in the biosynthesis of archaeal membrane lipids. The polypeptide is CDP-archaeol synthase (Methanococcoides burtonii (strain DSM 6242 / NBRC 107633 / OCM 468 / ACE-M)).